The primary structure comprises 97 residues: Secreted transmembrane peptide 4 (97 aa).

Residues 1–33 form the signal peptide; the sequence is MTKNMTKKKMGLMSPNIAAFVLPMLLVLFTISS. The short motif at 54-67 is the SCOOP motif element; sequence IVFTPPSSSCGGSP. Residues 60-62 carry the SxS motif essential for MIK2 binding motif; that stretch reads SSS. The segment at 75–97 is disordered; sequence WMPRRPCRRTRPPGTNIPVSQSP.

This sequence belongs to the serine rich endogenous peptide (SCOOP) phytocytokine family. Interacts with MIK2 (via extracellular leucine-rich repeat domain); this interaction triggers the formation of complex between MIK2 and the BAK1/SERK3 and SERK4 coreceptors, and subsequent BAK1 activation by phosphorylation. As to expression, mostly expressed in leaves and stems, and, to a lower extent, in roots, siliques, seeds and flowers.

The protein resides in the cell membrane. It localises to the secreted. Its subcellular location is the extracellular space. It is found in the apoplast. Its function is as follows. Brassicaceae-specific phytocytokine (plant endogenous peptide released into the apoplast) perceived by MIK2 in a BAK1/SERK3 and SERK4 coreceptors-dependent manner, that modulates various physiological and antimicrobial processes including growth prevention and reactive oxygen species (ROS) response regulation. Prevents general growth and development. In Arabidopsis thaliana (Mouse-ear cress), this protein is Secreted transmembrane peptide 4.